Here is a 188-residue protein sequence, read N- to C-terminus: Insulin-like growth factor 1 (188 aa).

The tract at residues 45–73 (GPETLCGAELVDTLQFVCGERGFYFSKPT) is b. 3 disulfide bridges follow: C50-C92, C62-C105, and C91-C96. The tract at residues 74 to 85 (GYGPSSRRSHNR) is c. The interval 86–106 (GIVDECCFQSCELRRLEMYCA) is a. The d stretch occupies residues 107 to 114 (PVKSGKAA). A propeptide spans 115–188 (RSVRAQRHTD…GNTGGRNYRM (74 aa)) (e peptide). Residues 115–188 (RSVRAQRHTD…GNTGGRNYRM (74 aa)) are disordered. Positions 140 to 153 (RGTERRTAQHPDKT) are enriched in basic and acidic residues.

Belongs to the insulin family. In terms of tissue distribution, all the isoforms are expressed in embryos, juvenile and adult liver, muscle and brain. At least one isoform is expressed in heart, kidney, testes, ovary, adipose tissue and spleen of juvenile salmon.

The protein resides in the secreted. Functionally, the insulin-like growth factors, isolated from plasma, are structurally and functionally related to insulin but have a much higher growth-promoting activity. Acts as a ligand for IGF1R. Binds to the alpha subunit of IGF1R, leading to the activation of the intrinsic tyrosine kinase activity which autophosphorylates tyrosine residues in the beta subunit thus initiatiating a cascade of down-stream signaling events leading to activation of the PI3K-AKT/PKB and the Ras-MAPK pathways. Binds to integrins. Its binding to integrins and subsequent ternary complex formation with integrins and IGFR1 are essential for IGF1 signaling. In Oncorhynchus kisutch (Coho salmon), this protein is Insulin-like growth factor 1.